Reading from the N-terminus, the 104-residue chain is Elicitor peptide 6 (104 aa).

A propeptide spanning residues 1-81 (MEVNGEEERR…TVEETGFMAR (81 aa)) is cleaved from the precursor. Low complexity predominate over residues 48–61 (SSSIPPSSSSSSPS). Residues 48–104 (SSSIPPSSSSSSPSLVEEEDSGTETVEETGFMARITAVLRRRPRPPPYSSGRPGQNN) are disordered. Residues 63 to 74 (VEEEDSGTETVE) show a composition bias toward acidic residues.

Belongs to the brassicaceae elicitor peptide family.

In terms of biological role, elicitor of plant defense. The polypeptide is Elicitor peptide 6 (PEP6) (Arabidopsis thaliana (Mouse-ear cress)).